The chain runs to 549 residues: Oxygen-dependent choline dehydrogenase (549 aa).

4–33 (DYVIVGSGSAGSAIAYRLSEDGRYSVIVIE) provides a ligand contact to FAD. His465 serves as the catalytic Proton acceptor. Residues 528 to 549 (KTPLPRSNQEPWVNPRAAVSDR) are disordered.

This sequence belongs to the GMC oxidoreductase family. The cofactor is FAD.

It catalyses the reaction choline + A = betaine aldehyde + AH2. The enzyme catalyses betaine aldehyde + NAD(+) + H2O = glycine betaine + NADH + 2 H(+). The protein operates within amine and polyamine biosynthesis; betaine biosynthesis via choline pathway; betaine aldehyde from choline (cytochrome c reductase route): step 1/1. Functionally, involved in the biosynthesis of the osmoprotectant glycine betaine. Catalyzes the oxidation of choline to betaine aldehyde and betaine aldehyde to glycine betaine at the same rate. The protein is Oxygen-dependent choline dehydrogenase of Agrobacterium fabrum (strain C58 / ATCC 33970) (Agrobacterium tumefaciens (strain C58)).